A 300-amino-acid polypeptide reads, in one-letter code: Sporulation protein SPS18 (300 aa).

An Arf-GAP domain is found at 11 to 130; it reads ENRKRLLRAK…LANEVRSNDI (120 aa). The C4-type zinc-finger motif lies at 28–51; that stretch reads CFECKSVNPQFVSCSFGIFICVNC.

This Saccharomyces cerevisiae (strain ATCC 204508 / S288c) (Baker's yeast) protein is Sporulation protein SPS18 (SPS18).